Consider the following 647-residue polypeptide: A-type voltage-gated potassium channel KCND1 (647 aa).

The Cytoplasmic portion of the chain corresponds to 1–183; that stretch reads MAAGVATWLP…RAFENPHTST (183 aa). The segment at 2–20 is interaction with KCNIP1, KCNIP2, and other family members; sequence AAGVATWLPFARAAAVGWL. Zn(2+) contacts are provided by H104, C131, and C132. The segment at 144–164 is disordered; that stretch reads AQRLAEDEEAEQTGDGPALPA. Residues 184–205 form a helical membrane-spanning segment; that stretch reads AALVFYYVTGFFIAVSVIANVV. Residues 206-230 lie on the Extracellular side of the membrane; the sequence is ETIPCRGPARRPPREQPCGDRFPLA. A helical membrane pass occupies residues 231–252; sequence FFCMDTACVLIFTGEYLLRLFA. At 253-263 the chain is on the cytoplasmic side; it reads APSRCRFLRSV. Residues 264–284 traverse the membrane as a helical segment; that stretch reads MSLIDVVAILPYYIGLLVPKN. The Extracellular segment spans residues 285 to 287; that stretch reads EDV. A helical; Voltage-sensor transmembrane segment spans residues 288–308; it reads SGAFVTLRVFRVFRIFKFSRH. At 309–323 the chain is on the cytoplasmic side; sequence SQGLRILGYTLKSCA. Residues 310-323 form an S4-S5 linker region; the sequence is QGLRILGYTLKSCA. The chain crosses the membrane as a helical span at residues 324–345; that stretch reads SELGFLLFSLTMAIIIFATVMF. At 346–359 the chain is on the extracellular side; sequence YAEKGTSKTNFTSI. Positions 360-371 form an intramembrane region, helical; that stretch reads PAAFWYTIVTMT. The Selectivity filter motif lies at 372-377; sequence TLGYGD. An intramembrane segment occupies 372 to 379; it reads TLGYGDMV. Residues 380–386 lie on the Extracellular side of the membrane; that stretch reads PSTIAGK. The helical transmembrane segment at 387 to 415 threads the bilayer; the sequence is IFGSICSLSGVLVIALPVPVIVSNFSRIY. The Cytoplasmic portion of the chain corresponds to 416-647; that stretch reads HQNQRADKRR…LPETVKISSL (232 aa). A required for dendritic targeting region spans residues 474 to 489; sequence FEQQHHHLLHCLEKTT. Low complexity predominate over residues 510 to 520; the sequence is GRTSRSTSVSS. The segment at 510 to 531 is disordered; sequence GRTSRSTSVSSQPVGPSSLLSS. Polar residues predominate over residues 521 to 530; the sequence is QPVGPSSLLS. Position 555 is a phosphoserine (S555). Disordered stretches follow at residues 564–584 and 601–634; these read GLRRSPGPQSRSSLNAKPHDS and IPTPPANTPDESQPSSPGGGGRASSTLRNSRLGT.

It belongs to the potassium channel family. D (Shal) (TC 1.A.1.2) subfamily. Kv4.1/KCND1 sub-subfamily. In terms of assembly, component of heteromultimeric potassium channels. Identified in potassium channel complexes containing KCND1, KCND2, KCND3, KCNIP1, KCNIP2, KCNIP3, KCNIP4, DPP6 and DPP10. Detected in carotid body chemoreceptor cells and in frontal cortex.

It is found in the cell membrane. The catalysed reaction is K(+)(in) = K(+)(out). In terms of biological role, A-type voltage-gated potassium channel that mediates transmembrane potassium transport in excitable membranes in the brain. Mediates A-type current I(SA) in suprachiasmatic nucleus (SCN) neurons. Exhibits a low-threshold A-type current with a hyperpolarized steady-state inactivation midpoint and the recovery process was steeply voltage-dependent, with recovery being markedly faster at more negative potentials. May regulates repetitive firing rates in the suprachiasmatic nucleus (SCN) neurons and circadian rhythms in neuronal excitability and behavior. Contributes to the regulation of the circadian rhythm of action potential firing in suprachiasmatic nucleus neurons, which regulates the circadian rhythm of locomotor activity. The regulatory subunit KCNIP1 modulates the kinetics of channel inactivation, increases the current amplitudes and accelerates recovery from inactivation, shifts activation in a depolarizing direction. The regulatory subunit DPP10 decreases the voltage sensitivity of the inactivation channel gating. The sequence is that of A-type voltage-gated potassium channel KCND1 from Oryctolagus cuniculus (Rabbit).